The chain runs to 37 residues: Large ribosomal subunit protein bL36B (37 aa).

It belongs to the bacterial ribosomal protein bL36 family.

This chain is Large ribosomal subunit protein bL36B, found in Kineococcus radiotolerans (strain ATCC BAA-149 / DSM 14245 / SRS30216).